We begin with the raw amino-acid sequence, 370 residues long: Aminomethyltransferase (370 aa).

Belongs to the GcvT family. The glycine cleavage system is composed of four proteins: P, T, L and H.

The catalysed reaction is N(6)-[(R)-S(8)-aminomethyldihydrolipoyl]-L-lysyl-[protein] + (6S)-5,6,7,8-tetrahydrofolate = N(6)-[(R)-dihydrolipoyl]-L-lysyl-[protein] + (6R)-5,10-methylene-5,6,7,8-tetrahydrofolate + NH4(+). In terms of biological role, the glycine cleavage system catalyzes the degradation of glycine. The protein is Aminomethyltransferase of Stenotrophomonas maltophilia (strain K279a).